We begin with the raw amino-acid sequence, 533 residues long: Receptor homology region, transmembrane domain- and RING domain-containing protein 1 (533 aa).

The N-terminal stretch at 1–26 (MNRRRTMLLLICLCATFCLMTQLGAA) is a signal peptide. The Lumenal portion of the chain corresponds to 27–167 (NVVLMGTNLT…LPAFENSAWS (141 aa)). N-linked (GlcNAc...) asparagine glycosylation is present at asparagine 34. Residues cysteine 68 and cysteine 91 are joined by a disulfide bond. A PA domain is found at 84–145 (ALIIRGGCTF…ISKASGEVLK (62 aa)). The chain crosses the membrane as a helical span at residues 168–188 (IMAISFISLLAMSAVLATCFF). The Cytoplasmic portion of the chain corresponds to 189–533 (VRRHHIRRDR…MASAQSLPGC (345 aa)). The segment at 236-278 (CAICLEDYNVGEKLRVLPCRHKFHAACVDLWLTTWRTFCPVCK) adopts an RING-type; atypical zinc-finger fold. Disordered stretches follow at residues 309–329 (SFRS…PSSQ) and 440–476 (LRRC…LAGA). Polar residues predominate over residues 448–463 (PSLSTMAPQSPQQSQL).

It localises to the prevacuolar compartment membrane. The protein localises to the protein storage vacuole membrane. It is found in the golgi apparatus membrane. In terms of biological role, involved in the trafficking of vacuolar proteins. Functions probably as a sorting receptor for protein trafficking to the protein storage vacuole (PSV) by binding the C-terminal vacuolar sorting determinant (VSD) of vacuolar-sorted proteins. In Oryza sativa subsp. japonica (Rice), this protein is Receptor homology region, transmembrane domain- and RING domain-containing protein 1.